Reading from the N-terminus, the 318-residue chain is Methionyl-tRNA formyltransferase (318 aa).

117–120 (SLLP) contacts (6S)-5,6,7,8-tetrahydrofolate.

This sequence belongs to the Fmt family.

It catalyses the reaction L-methionyl-tRNA(fMet) + (6R)-10-formyltetrahydrofolate = N-formyl-L-methionyl-tRNA(fMet) + (6S)-5,6,7,8-tetrahydrofolate + H(+). In terms of biological role, attaches a formyl group to the free amino group of methionyl-tRNA(fMet). The formyl group appears to play a dual role in the initiator identity of N-formylmethionyl-tRNA by promoting its recognition by IF2 and preventing the misappropriation of this tRNA by the elongation apparatus. The protein is Methionyl-tRNA formyltransferase of Malacoplasma penetrans (strain HF-2) (Mycoplasma penetrans).